We begin with the raw amino-acid sequence, 514 residues long: MIPDVSQALAWLEKHPQALKGIQRGLERETLRVNADGSLATTGHPESLGSALTHKWITTDFAEALLEFITPVDGDIDHMLTLMRDVHRYTARQLGDERMWPLSMPCYIEQGQDIELAQYGTSNIGRLKTLYREGLKNRYGALMQTISGVHYNFSLPMAFWQAKCGETDKEAISAGYFRLIRNYYRFGWVIPYLFGASPAICSSFLQGKPTTLPFEKTDCGMYYLPYATSLRLSDLGYTNKSQSNLGITFNDLHEYVAGLKRAIKTPSEEYETIGLEKDGKRLQINSNVLQIENELYAPIRPKRVTRSGEAPSDALERGGIEYIEVRSLDINPFSPIGVDEQQIRFLDLFMVWCVLADAPEMSSDELLCTRTNWNRVILEGRKPGLTLGIGCETAQFPLAKVGKDLFRDLKRVAQTMDSLYGGEEYQKVCDQLVESFDNPELTFSARILRSMIDQGIGGTGRTLAAQYRDMLQQEPLEVLSEEDFVAEREASIARQREVEAGDTESFEAFLAKHA.

It belongs to the glutamate--cysteine ligase type 1 family. Type 1 subfamily.

It catalyses the reaction L-cysteine + L-glutamate + ATP = gamma-L-glutamyl-L-cysteine + ADP + phosphate + H(+). The protein operates within sulfur metabolism; glutathione biosynthesis; glutathione from L-cysteine and L-glutamate: step 1/2. This Enterobacter sp. (strain 638) protein is Glutamate--cysteine ligase.